Reading from the N-terminus, the 207-residue chain is Large ribosomal subunit protein uL4 (207 aa).

Residues Lys-50 to Gly-76 form a disordered region.

This sequence belongs to the universal ribosomal protein uL4 family. As to quaternary structure, part of the 50S ribosomal subunit.

Functionally, one of the primary rRNA binding proteins, this protein initially binds near the 5'-end of the 23S rRNA. It is important during the early stages of 50S assembly. It makes multiple contacts with different domains of the 23S rRNA in the assembled 50S subunit and ribosome. In terms of biological role, forms part of the polypeptide exit tunnel. This is Large ribosomal subunit protein uL4 from Rickettsia typhi (strain ATCC VR-144 / Wilmington).